Here is a 3564-residue protein sequence, read N- to C-terminus: CUB and sushi domain-containing protein 1 (3564 aa).

The first 29 residues, 1–29 (MTAWRKFKSLLLPLVLAVLCAGLLTAAKG), serve as a signal peptide directing secretion. The Extracellular segment spans residues 30–3487 (QNCGGLVQGP…NHYQGTSSGS (3458 aa)). Disulfide bonds link C32–C58, C145–C185, C171–C202, C208–C234, C349–C389, C375–C406, C411–C437, C527–C567, C553–C580, and C584–C610. A CUB 1 domain is found at 32-140 (CGGLVQGPNG…QGFKAMYEVL (109 aa)). N40 and N57 each carry an N-linked (GlcNAc...) asparagine glycan. Residues 143-204 (HTCGNPGEIL…WDFPAPFCRA (62 aa)) enclose the Sushi 1 domain. The 105-residue stretch at 208-312 (CGGTLRGTSG…KGFNAQFQVK (105 aa)) folds into the CUB 2 domain. The 62-residue stretch at 347 to 408 (DMCPDPGIPD…WNDHRPICRA (62 aa)) folds into the Sushi 2 domain. Positions 411 to 522 (CGSNLRGPSG…PGFKAVYQEI (112 aa)) constitute a CUB 3 domain. In terms of domain architecture, Sushi 3 spans 525 to 582 (GGCGDPGIPAYGKRTGSSFLHGDTLTFECQAAFELVGERVITCQKNNQWSGNKPSCVF). The region spanning 584–692 (CFFNFTAPSG…RGFNITYTTF (109 aa)) is the CUB 4 domain. Residues N587 and N686 are each glycosylated (N-linked (GlcNAc...) asparagine). Residues 695-756 (NECHDPGIPV…WSSTVPRCEA (62 aa)) form the Sushi 4 domain. Cystine bridges form between C697–C738, C723–C754, C758–C784, C873–C913, C899–C926, and C930–C956. The 109-residue stretch at 758–866 (CGGHLTASSG…VGFLIHYESV (109 aa)) folds into the CUB 5 domain. One can recognise a Sushi 5 domain in the interval 871–928 (DSCLDPGIPVNGQRHGSNFGIRSTVTFSCDPGYTLSDDEPLVCEKNHQWNHALPSCDA). The CUB 6 domain occupies 930 to 1040 (CGGYIHGKSG…EGFNITFAEY (111 aa)). N955, N1015, and N1034 each carry an N-linked (GlcNAc...) asparagine glycan. Positions 1043 to 1102 (EPCDDPGVPAFSRRIGFQFGVGDTLAFTCFQGYRLEGATKLTCLGGGRRVWSAPLPRCVA) constitute a Sushi 6 domain. Disulfide bonds link C1045-C1085, C1071-C1100, and C1104-C1130. The CUB 7 domain occupies 1104–1212 (CGASVKGNEG…QGFQLTYTSF (109 aa)). N1184 and N1197 each carry an N-linked (GlcNAc...) asparagine glycan. Residues 1215 to 1275 (VKCEDPGIPN…WDKPMPSCVA (61 aa)) form the Sushi 7 domain. 12 disulfide bridges follow: C1217/C1258, C1244/C1273, C1277/C1304, C1391/C1431, C1417/C1447, C1451/C1477, C1564/C1604, C1590/C1621, C1625/C1651, C1741/C1781, C1767/C1798, and C1802/C1828. In terms of domain architecture, CUB 8 spans 1277 to 1386 (CGGLVHAATS…SGFSIQFSTS (110 aa)). The 61-residue stretch at 1389–1449 (STCNDPGMPQ…WQPDPPSCIA (61 aa)) folds into the Sushi 8 domain. N1399 carries N-linked (GlcNAc...) asparagine glycosylation. The CUB 9 domain occupies 1451 to 1559 (CGGNLTGPAG…SGFAIEFKEK (109 aa)). N-linked (GlcNAc...) asparagine glycans are attached at residues N1454 and N1572. In terms of domain architecture, Sushi 9 spans 1562 to 1623 (EACFDPGNIM…WDRALPACQA (62 aa)). In terms of domain architecture, CUB 10 spans 1625-1733 (CGGQYTGSEG…RGFHFVYQAV (109 aa)). N1644 is a glycosylation site (N-linked (GlcNAc...) asparagine). A Sushi 10 domain is found at 1739-1800 (TQCSSVPEPR…WNDTIPSCVV (62 aa)). 3 N-linked (GlcNAc...) asparagine glycosylation sites follow: N1792, N1805, and N1882. Positions 1802–1910 (CSGNFTQRRG…AGFHLEYKTV (109 aa)) constitute a CUB 11 domain. The 60-residue stretch at 1913–1972 (AACQEPALPSNGIKIGDRYMVNDVLSFQCEPGYTLQGRSHISCMPGTVRRWNYPSPLCIA) folds into the Sushi 11 domain. 3 cysteine pairs are disulfide-bonded: C1915–C1955, C1941–C1970, and C1974–C2000. A CUB 12 domain is found at 1974–2082 (CGGTLTSMSG…QGFKLSYQAY (109 aa)). N2018 is a glycosylation site (N-linked (GlcNAc...) asparagine). One can recognise a Sushi 12 domain in the interval 2085 to 2144 (QNCPDPPAFQNGFMINSDYSVGQSISFECYPGYILLGHPVLTCQHGTDRNWNYPFPRCDA). Cystine bridges form between C2087/C2127, C2113/C2142, and C2146/C2172. The 112-residue stretch at 2146–2257 (CGYNVTSQNG…LNFHAFQLKR (112 aa)) folds into the CUB 13 domain. Residues N2149, N2154, and N2187 are each glycosylated (N-linked (GlcNAc...) asparagine). In terms of domain architecture, Sushi 13 spans 2256 to 2317 (KRCPPPPAVP…FQGSPPTCEA (62 aa)). 3 cysteine pairs are disulfide-bonded: C2258–C2300, C2286–C2315, and C2319–C2347. Residues 2319 to 2430 (CPANEVRTES…KGFKIRYAAP (112 aa)) enclose the CUB 14 domain. N-linked (GlcNAc...) asparagine glycans are attached at residues N2358, N2394, N2400, N2445, N2470, and N2503. Sushi domains lie at 2430 to 2492 (PYCS…LCQA), 2493 to 2554 (VSCG…TCKP), 2555 to 2619 (VPCP…RCKV), 2620 to 2677 (ISCG…RCLA), 2678 to 2735 (GHCG…VCVP), 2736 to 2793 (ITCG…ICRV), 2794 to 2856 (VNCS…KCLA), 2857 to 2914 (ISCG…HCSG), 2918 to 2975 (GFCG…VCEA), 2976 to 3034 (VSCG…DCTI), 3035 to 3094 (ISCG…LCKA), 3095 to 3152 (VLCN…QCLP), 3153 to 3210 (VFCG…TCID), 3214 to 3272 (TACP…ECIP), and 3273 to 3332 (HACR…VCKS). 12 disulfides stabilise this stretch: C2432/C2473, C2459/C2490, C2495/C2537, C2521/C2552, C2557/C2602, C2588/C2617, C2622/C2662, C2648/C2675, C2680/C2720, C2706/C2733, C2738/C2778, and C2764/C2791. N2605 carries an N-linked (GlcNAc...) asparagine glycan. 2 N-linked (GlcNAc...) asparagine glycosylation sites follow: N2750 and N2761. N2795 carries N-linked (GlcNAc...) asparagine glycosylation. Intrachain disulfides connect C2796-C2841, C2827-C2854, C2859-C2899, C2885-C2912, C2920-C2960, C2946-C2973, C2978-C3019, C3005-C3032, C3037-C3079, C3063-C3092, C3097-C3137, C3123-C3150, C3155-C3195, C3181-C3208, C3216-C3257, C3243-C3270, C3275-C3317, and C3302-C3330. N-linked (GlcNAc...) asparagine glycosylation occurs at N2894. An N-linked (GlcNAc...) asparagine glycan is attached at N2963. N-linked (GlcNAc...) asparagine glycans are attached at residues N3022, N3056, and N3086. N-linked (GlcNAc...) asparagine glycans are attached at residues N3228 and N3260. 3 N-linked (GlcNAc...) asparagine glycosylation sites follow: N3339, N3379, and N3386. Residues 3488–3508 (VAAAILVPFFALILSGFAFYL) form a helical membrane-spanning segment. Over 3509–3564 (YKHRTRPKVQYNGYAGHENSNGQASFENPMYDTNLKPTEAKAVRFDTTLNTVCTVV) the chain is Cytoplasmic.

This sequence belongs to the CSMD family.

The protein resides in the membrane. The polypeptide is CUB and sushi domain-containing protein 1 (Csmd1) (Mus musculus (Mouse)).